We begin with the raw amino-acid sequence, 297 residues long: Homoserine kinase (297 aa).

Residue Pro-82–Ser-92 coordinates ATP.

This sequence belongs to the GHMP kinase family. Homoserine kinase subfamily.

It localises to the cytoplasm. It catalyses the reaction L-homoserine + ATP = O-phospho-L-homoserine + ADP + H(+). It participates in amino-acid biosynthesis; L-threonine biosynthesis; L-threonine from L-aspartate: step 4/5. In terms of biological role, catalyzes the ATP-dependent phosphorylation of L-homoserine to L-homoserine phosphate. In Bacillus cereus (strain B4264), this protein is Homoserine kinase.